A 350-amino-acid chain; its full sequence is MDAIAARALSVVRACVTVTDARVSLDPGVMETLGIAINRYNGLTNHSVSMRPQTQAERNEMFFMCTDMVLAALNVQIGNISPDYDQALATVGALATTEIPYNVQAMNDIVRITGQMQTFGPSKVQTGPYAGAVEVQQSGRYYVPQGRTRGGYINSNIAEVCMDAGAAGQVNALLAPRRGDAVMIYFVWRPLRIFCDPQGASLESAPGTFVTVDGVNVAAGDVVAWNTIAPVNVGNPGARRSILQFEVLWYTSLDRSLDTVPELAPTLTRCYAYVSPTWHALRAVIFQQMNMQPINPPIFPPTERNEIVAYLLLVASLADVYAALRPDFRMNGVVAPVGQINRALVLAAYH.

An N-linked (GlcNAc...) asparagine; by host glycan is attached at Asn45.

The protein belongs to the orbivirus VP7 family. As to quaternary structure, homotrimer.

The protein localises to the virion. Major structural core protein; binds to structural protein VP3. Constitutes the surface of the AHSV core. This chain is Core protein VP7 (Segment-7), found in African horse sickness virus (AHSV).